Here is a 473-residue protein sequence, read N- to C-terminus: L-seryl-tRNA(Sec) selenium transferase (473 aa).

Lys-302 carries the post-translational modification N6-(pyridoxal phosphate)lysine.

The protein belongs to the SelA family. The cofactor is pyridoxal 5'-phosphate.

It localises to the cytoplasm. The enzyme catalyses L-seryl-tRNA(Sec) + selenophosphate + H(+) = L-selenocysteinyl-tRNA(Sec) + phosphate. Its pathway is aminoacyl-tRNA biosynthesis; selenocysteinyl-tRNA(Sec) biosynthesis; selenocysteinyl-tRNA(Sec) from L-seryl-tRNA(Sec) (bacterial route): step 1/1. Its function is as follows. Converts seryl-tRNA(Sec) to selenocysteinyl-tRNA(Sec) required for selenoprotein biosynthesis. The sequence is that of L-seryl-tRNA(Sec) selenium transferase from Shewanella oneidensis (strain ATCC 700550 / JCM 31522 / CIP 106686 / LMG 19005 / NCIMB 14063 / MR-1).